The sequence spans 727 residues: Glycerol-3-phosphate dehydrogenase, mitochondrial (727 aa).

A mitochondrion-targeting transit peptide spans 1 to 42 (MAFQKAVKRTVLVCGGALATVLGLSQCSHYRRKQVNLACLKA). 71-99 (DILVIGGGATGSGCALDAVTRGLKTALVE) contacts FAD. Residue Tyr601 is modified to Phosphotyrosine. EF-hand domains are found at residues 623–658 (SDIE…INVK) and 659–694 (IDEN…IQKG). 5 residues coordinate Ca(2+): Asp672, Asn674, Asn676, Gln678, and Glu683.

It belongs to the FAD-dependent glycerol-3-phosphate dehydrogenase family. FAD is required as a cofactor.

Its subcellular location is the mitochondrion. It catalyses the reaction a quinone + sn-glycerol 3-phosphate = dihydroxyacetone phosphate + a quinol. The protein operates within polyol metabolism; glycerol degradation via glycerol kinase pathway; glycerone phosphate from sn-glycerol 3-phosphate (aerobic route): step 1/1. With respect to regulation, calcium-binding enhance the activity of the enzyme. Functionally, calcium-responsive mitochondrial glycerol-3-phosphate dehydrogenase which seems to be a key component of the pancreatic beta-cell glucose-sensing device. In Mesocricetus auratus (Golden hamster), this protein is Glycerol-3-phosphate dehydrogenase, mitochondrial (GPD2).